Consider the following 101-residue polypeptide: Small ribosomal subunit protein uS14 (101 aa).

It belongs to the universal ribosomal protein uS14 family. Part of the 30S ribosomal subunit. Contacts proteins S3 and S10.

Its function is as follows. Binds 16S rRNA, required for the assembly of 30S particles and may also be responsible for determining the conformation of the 16S rRNA at the A site. The protein is Small ribosomal subunit protein uS14 of Leifsonia xyli subsp. xyli (strain CTCB07).